The chain runs to 261 residues: Segregation and condensation protein A (261 aa).

The protein belongs to the ScpA family. Component of a cohesin-like complex composed of ScpA, ScpB and the Smc homodimer, in which ScpA and ScpB bind to the head domain of Smc. The presence of the three proteins is required for the association of the complex with DNA.

The protein localises to the cytoplasm. In terms of biological role, participates in chromosomal partition during cell division. May act via the formation of a condensin-like complex containing Smc and ScpB that pull DNA away from mid-cell into both cell halves. In Leptospira interrogans serogroup Icterohaemorrhagiae serovar copenhageni (strain Fiocruz L1-130), this protein is Segregation and condensation protein A.